A 94-amino-acid chain; its full sequence is Large ribosomal subunit protein uL23 (94 aa).

It belongs to the universal ribosomal protein uL23 family. In terms of assembly, part of the 50S ribosomal subunit. Contacts protein L29, and trigger factor when it is bound to the ribosome.

In terms of biological role, one of the early assembly proteins it binds 23S rRNA. One of the proteins that surrounds the polypeptide exit tunnel on the outside of the ribosome. Forms the main docking site for trigger factor binding to the ribosome. The polypeptide is Large ribosomal subunit protein uL23 (Listeria monocytogenes serotype 4b (strain CLIP80459)).